The following is a 504-amino-acid chain: MFSFGTVFTFALLLIPLTEAVDSSYVAAVYEHNLILNPDPRVPLSRLEALQHLQKNLDIFEVQAARAAQQGAQIIVFPEDGLHGFNFSRTSISAYLETVPDPEQESWNPCLEPLRHNNTEVLQQLSCMARRNNLYLVANMADLQPCSVSAAPSSCPPDGRWQFNTNVVFRSDGLLVARYHKYNLYFEAAFDAPPEPEIVTFDTPFAGKFGLITCFDILFQEPTVILVEKGVRQIIFPAAWMNQLPLLDIIQFQRAFSLGANVTLLAANIRNDQLIMTGSGIYTPFSATYHHAQRGDPEEGRLLVARVPVLDPEWLGHNAASGEAAAVDESSGYCYSETCLDSPASTAPVFVSSMMYDPFTFALLNATDGEMRVCNGTFCCYLQYRWVTETGRTELYALGAFDGTHTVNGRYAVQVCALVRCAGSDASSCGQEVDEAESKLDFMLEGKFASRHVYPSVLSSGMVLEQPERVEAAADGRVSLKHSNVMGGLVTACLYGRMHHLDTA.

A signal peptide spans 1–20 (MFSFGTVFTFALLLIPLTEA). Residues 30 to 309 (YEHNLILNPD…GRLLVARVPV (280 aa)) form the CN hydrolase domain. Catalysis depends on glutamate 79, which acts as the Proton acceptor. 2 N-linked (GlcNAc...) asparagine glycosylation sites follow: asparagine 86 and asparagine 117. Catalysis depends on lysine 181, which acts as the Proton donor. Residue cysteine 214 is the Nucleophile of the active site. Asparagine 261, asparagine 365, and asparagine 375 each carry an N-linked (GlcNAc...) asparagine glycan.

This sequence belongs to the carbon-nitrogen hydrolase superfamily. BTD/VNN family.

Its subcellular location is the secreted. The protein localises to the extracellular space. It carries out the reaction biocytin + H2O = biotin + L-lysine. It catalyses the reaction biotin amide + H2O = biotin + NH4(+). In terms of biological role, catalytic release of biotin from biocytin, the product of biotin-dependent carboxylases degradation. This is Biotinidase (btd) from Takifugu rubripes (Japanese pufferfish).